The following is a 291-amino-acid chain: Methionine aminopeptidase (291 aa).

A substrate-binding site is contributed by H118. Residues D135, D146, and H209 each coordinate a divalent metal cation. Residue H216 participates in substrate binding. Positions 241 and 273 each coordinate a divalent metal cation.

The protein belongs to the peptidase M24A family. Methionine aminopeptidase type 1 subfamily. As to quaternary structure, monomer. Co(2+) is required as a cofactor. Requires Zn(2+) as cofactor. Mn(2+) serves as cofactor. The cofactor is Fe(2+).

It catalyses the reaction Release of N-terminal amino acids, preferentially methionine, from peptides and arylamides.. Its function is as follows. Removes the N-terminal methionine from nascent proteins. The N-terminal methionine is often cleaved when the second residue in the primary sequence is small and uncharged (Met-Ala-, Cys, Gly, Pro, Ser, Thr, or Val). Requires deformylation of the N(alpha)-formylated initiator methionine before it can be hydrolyzed. This chain is Methionine aminopeptidase, found in Chlamydia muridarum (strain MoPn / Nigg).